The chain runs to 533 residues: Malate synthase A (533 aa).

Residue Arg-166 is the Proton acceptor of the active site. Asp-447 acts as the Proton donor in catalysis.

Belongs to the malate synthase family.

Its subcellular location is the cytoplasm. The enzyme catalyses glyoxylate + acetyl-CoA + H2O = (S)-malate + CoA + H(+). It participates in carbohydrate metabolism; glyoxylate cycle; (S)-malate from isocitrate: step 2/2. This chain is Malate synthase A (aceB), found in Escherichia coli (strain K12).